The chain runs to 145 residues: Acidic phospholipase A2 (145 aa).

Residues 1 to 21 form the signal peptide; the sequence is MYPAHLLVLLAVCVSLLGAAS. Positions 22 to 27 are excised as a propeptide; it reads IPPLPL. 7 disulfides stabilise this stretch: Cys38-Cys98, Cys54-Cys144, Cys56-Cys72, Cys71-Cys125, Cys78-Cys118, Cys87-Cys111, and Cys105-Cys116. Ca(2+) is bound by residues Tyr55 and Gly57. His75 is a catalytic residue. Ca(2+) is bound at residue Asp76. Asp119 is a catalytic residue.

The protein belongs to the phospholipase A2 family. Group I subfamily. D49 sub-subfamily. The cofactor is Ca(2+). Expressed by the venom gland.

The protein localises to the secreted. It carries out the reaction a 1,2-diacyl-sn-glycero-3-phosphocholine + H2O = a 1-acyl-sn-glycero-3-phosphocholine + a fatty acid + H(+). PLA2 catalyzes the calcium-dependent hydrolysis of the 2-acyl groups in 3-sn-phosphoglycerides. The polypeptide is Acidic phospholipase A2 (Notechis scutatus scutatus (Mainland tiger snake)).